The sequence spans 310 residues: MPVLAVDKPLNLTSHDVVNRARRARGTRRVGHTGTLDPLATGVLVLCVDDSTKVVQFMEHDSKDYLAWVSLGAGTPTLDAEGPVDATAPVPPLDEDHIRGMLTTFCGPQQQIPPQYSAIQLGGQRAYAVARAGGTLELPARNIVIHSLDLLRVYPSVQAAPRMFSATPEGWSPDPQGQAFSLPEPLGEFPTLLLRASVGSGTYLRSLARDLGAALGVPAHLAGLVRTRVGRYDLSGAVSLEDLAEAPGIPDLEALDFPRIQASERLALELRQGKRPRHTAQGRHVVTLEGQLVAVVDGDGEQLKVVRAWA.

Aspartate 37 serves as the catalytic Nucleophile.

Belongs to the pseudouridine synthase TruB family. Type 1 subfamily.

The catalysed reaction is uridine(55) in tRNA = pseudouridine(55) in tRNA. Functionally, responsible for synthesis of pseudouridine from uracil-55 in the psi GC loop of transfer RNAs. This chain is tRNA pseudouridine synthase B, found in Deinococcus deserti (strain DSM 17065 / CIP 109153 / LMG 22923 / VCD115).